The primary structure comprises 340 residues: Farnesyl pyrophosphate synthase 1 (340 aa).

Residues Lys-47, Arg-50, and Gln-85 each contribute to the isopentenyl diphosphate site. Residues Asp-92 and Asp-96 each contribute to the Mg(2+) site. Arg-101 is a binding site for dimethylallyl diphosphate. Arg-102 serves as a coordination point for isopentenyl diphosphate. Residues Lys-188, Thr-189, Gln-227, Lys-244, and Lys-253 each coordinate dimethylallyl diphosphate.

This sequence belongs to the FPP/GGPP synthase family. The cofactor is Mg(2+). As to expression, mainly expressed in trichomes and flowers, and, to a lower extent, in leaves, roots and stems.

It localises to the cytoplasm. The protein localises to the nucleus. The enzyme catalyses isopentenyl diphosphate + dimethylallyl diphosphate = (2E)-geranyl diphosphate + diphosphate. It catalyses the reaction isopentenyl diphosphate + (2E)-geranyl diphosphate = (2E,6E)-farnesyl diphosphate + diphosphate. It functions in the pathway isoprenoid biosynthesis; farnesyl diphosphate biosynthesis; farnesyl diphosphate from geranyl diphosphate and isopentenyl diphosphate: step 1/1. It participates in sesquiterpene biosynthesis. Its pathway is isoprenoid biosynthesis; geranyl diphosphate biosynthesis; geranyl diphosphate from dimethylallyl diphosphate and isopentenyl diphosphate: step 1/1. Catalyzes the sequential condensation of isopentenyl pyrophosphate with the allylic pyrophosphates, dimethylallyl pyrophosphate, and then with the resultant geranylpyrophosphate to the ultimate product farnesyl pyrophosphate. This Cannabis sativa (Hemp) protein is Farnesyl pyrophosphate synthase 1.